Consider the following 287-residue polypeptide: (S)-phenoxypropionate/alpha-ketoglutarate-dioxygenase (287 aa).

Residues histidine 102 and aspartate 104 each contribute to the Fe cation site. The 2-oxoglutarate site is built by threonine 129 and tryptophan 242. Residue histidine 257 participates in Fe cation binding. Residue arginine 268 participates in 2-oxoglutarate binding.

It belongs to the TfdA dioxygenase family. As to quaternary structure, monomer. Requires Fe cation as cofactor. It depends on L-ascorbate as a cofactor.

It catalyses the reaction (S)-2-(4-chloro-2-methylphenoxy)propanoate + 2-oxoglutarate + O2 = 2-methyl-4-chlorophenol + pyruvate + succinate + CO2. The catalysed reaction is (S)-(2,4-dichlorophenoxy)propanoate + 2-oxoglutarate + O2 = 2,4-dichlorophenol + pyruvate + succinate + CO2. It participates in xenobiotic degradation; 2-(2,4-dichlorophenoxy)propanoate degradation. In terms of biological role, involved in the degradation of the phenoxypropionate herbicides. Catalyzes the enantiospecific cleavage of the ether bond in the herbicid S-dichlorprop ((S)-2-(2,4-dichlorophenoxy)propionate)(S-2,4-DP) and S-mecoprop ((S)-2-(4-chloro-2-methylphenoxy)propionate)(S-2,4-MCPP). It can also accept (RS)-2-(4-chloro-2-methylphenoxy)propionate ((RS)-2,4-MCPP) and phenoxyacetate derivatives such as 2,4-dichlorophenoxyacetate (2,4-D), however it can only accept 2-oxoglutarate as oxygen acceptor. The sequence is that of (S)-phenoxypropionate/alpha-ketoglutarate-dioxygenase from Sphingobium herbicidovorans (strain ATCC 700291 / DSM 11019 / CCUG 56400 / KCTC 2939 / LMG 18315 / NBRC 16415 / MH) (Sphingomonas herbicidovorans).